A 1049-amino-acid chain; its full sequence is Desmoglein-1 (1049 aa).

Residues 1-23 form the signal peptide; that stretch reads MDWSFFRVVAMLFIFLVVVEVNS. The propeptide occupies 24 to 49; it reads EFRIQVRDYNTKNGTIKWHSIRRQKR. Residues Asn36, Asn110, and Asn180 are each glycosylated (N-linked (GlcNAc...) asparagine). Cadherin domains are found at residues 50–158, 159–270, 271–385, and 386–497; these read EWIK…PVFS, MATF…PYME, QSSY…GPVF, and RPGS…TEPN. The Extracellular segment spans residues 50–548; that stretch reads EWIKFAAACR…LLSDNVHFGP (499 aa). Residues 485-534 are disordered; the sequence is SFGNDDRTNTEPNTKITTNTGRQESTSSTNYDTSTTSTDSSQVYSSEPGN. Residues 494 to 508 show a composition bias toward polar residues; that stretch reads TEPNTKITTNTGRQE. The segment covering 509-530 has biased composition (low complexity); that stretch reads STSSTNYDTSTTSTDSSQVYSS. A helical membrane pass occupies residues 549–569; it reads AGIGLLIMGFLVLGLVPFLMI. Topologically, residues 570-1049 are cytoplasmic; the sequence is CCDCGGAPRS…TKYSTVQYSK (480 aa). The residue at position 579 (Ser579) is a Phosphoserine. 5 Desmoglein repeat repeats span residues 813 to 839, 840 to 869, 870 to 899, 900 to 927, and 928 to 956; these read TYPS…TVTE, SYTT…ERVV, GPIS…ERVI, APSS…ERVI, and QPTS…ERVV. The tract at residues 1014–1035 is disordered; sequence HMRSSSDHHFNQTIGSASPSTA. Polar residues predominate over residues 1024 to 1035; it reads NQTIGSASPSTA.

In terms of assembly, binds to JUP/plakoglobin. Interacts with PKP2. Interacts with DSC3; there is evidence to suggest that the interaction promotes cell-cell adhesion of keratinocytes. (Microbial infection) Interacts with Staphylococcus aureus protein SdrD; this interaction increases S.aureus adherence to keratinocytes. As to expression, expressed in all suprabasal layers of the epidermis, with the highest expression seen in the granular layer (at protein level).

It localises to the cell membrane. The protein resides in the cell junction. The protein localises to the desmosome. It is found in the cytoplasm. Its subcellular location is the nucleus. In terms of biological role, component of intercellular desmosome junctions. Involved in the interaction of plaque proteins and intermediate filaments mediating cell-cell adhesion. The protein is Desmoglein-1 (DSG1) of Homo sapiens (Human).